The chain runs to 402 residues: Arginine deiminase (402 aa).

Residue Cys-391 is the Amidino-cysteine intermediate of the active site.

The protein belongs to the arginine deiminase family.

It is found in the cytoplasm. It catalyses the reaction L-arginine + H2O = L-citrulline + NH4(+). It participates in amino-acid degradation; L-arginine degradation via ADI pathway; carbamoyl phosphate from L-arginine: step 1/2. The polypeptide is Arginine deiminase (Mycobacterium marinum (strain ATCC BAA-535 / M)).